The following is a 317-amino-acid chain: Beta-ketoacyl-[acyl-carrier-protein] synthase III (317 aa).

Active-site residues include cysteine 112 and histidine 244. Residues 245 to 249 (QANIR) are ACP-binding. Asparagine 274 is an active-site residue.

It belongs to the thiolase-like superfamily. FabH family. In terms of assembly, homodimer.

The protein resides in the cytoplasm. The catalysed reaction is malonyl-[ACP] + acetyl-CoA + H(+) = 3-oxobutanoyl-[ACP] + CO2 + CoA. The protein operates within lipid metabolism; fatty acid biosynthesis. Its function is as follows. Catalyzes the condensation reaction of fatty acid synthesis by the addition to an acyl acceptor of two carbons from malonyl-ACP. Catalyzes the first condensation reaction which initiates fatty acid synthesis and may therefore play a role in governing the total rate of fatty acid production. Possesses both acetoacetyl-ACP synthase and acetyl transacylase activities. Its substrate specificity determines the biosynthesis of branched-chain and/or straight-chain of fatty acids. The chain is Beta-ketoacyl-[acyl-carrier-protein] synthase III from Rickettsia felis (strain ATCC VR-1525 / URRWXCal2) (Rickettsia azadi).